Reading from the N-terminus, the 157-residue chain is Transcription elongation factor GreA (157 aa).

The stretch at 47-75 (ENAEYDAAREKQGQIEDRITELENILSNA) forms a coiled coil.

The protein belongs to the GreA/GreB family.

Functionally, necessary for efficient RNA polymerase transcription elongation past template-encoded arresting sites. The arresting sites in DNA have the property of trapping a certain fraction of elongating RNA polymerases that pass through, resulting in locked ternary complexes. Cleavage of the nascent transcript by cleavage factors such as GreA or GreB allows the resumption of elongation from the new 3'terminus. GreA releases sequences of 2 to 3 nucleotides. This is Transcription elongation factor GreA from Mycoplasmopsis pulmonis (strain UAB CTIP) (Mycoplasma pulmonis).